The sequence spans 92 residues: MLCAIYKTKRKEGMYLYIEKRGHFDSVPSSLLESFGKPIFVMLFNLAGQKSLINANNEDVQQQIKQNGFYLQMPKQQENLLEQERQYLKHNK.

Residues 1-85 (MLCAIYKTKR…QQENLLEQER (85 aa)) enclose the YcgL domain.

This chain is YcgL domain-containing protein HS_0805, found in Histophilus somni (strain 129Pt) (Haemophilus somnus).